We begin with the raw amino-acid sequence, 1203 residues long: Cation-transporting ATPase catp-5 (1203 aa).

At 1-68 the chain is on the cytoplasmic side; it reads MNTSEREPLL…YAYKETIGRQ (68 aa). Residues 21–42 are disordered; the sequence is TTDNPSTKIMKREKDNPKAKTT. Residues 69–89 traverse the membrane as a helical segment; it reads ILFWLLTIVTLGFYQLLAYWV. The Extracellular portion of the chain corresponds to 90–209; the sequence is KSLFVKVRFQ…RKIYNMNALA (120 aa). The chain crosses the membrane as a helical span at residues 210-230; it reads LALTPILVILFKEVLGPFYLF. Over 231 to 242 the chain is Cytoplasmic; sequence QCFSVALWYSDN. Residues 243-263 traverse the membrane as a helical segment; the sequence is YAYYASVIVIITVGSAAVAVY. Over 264-297 the chain is Extracellular; that stretch reads QMRAQEKRIRNMVGDTISVIVRRDGHDITIDASE. The chain crosses the membrane as a helical span at residues 298–318; that stretch reads IVPMDILILPSNTFILPCDCL. The Cytoplasmic portion of the chain corresponds to 319–414; that stretch reads LMNGTVIVNE…KPQEKEALKD (96 aa). Residues 415–435 traverse the membrane as a helical segment; it reads VMVFILVLGFIALIGFIYTVI. Residues 436-451 lie on the Extracellular side of the membrane; sequence EMVSRGESLKHIIIRS. The chain crosses the membrane as a helical span at residues 452-472; that stretch reads LDIITIVVPPALPAAMSVGII. The Cytoplasmic segment spans residues 473–935; that stretch reads NANSRLKKKK…KEGRCALVTS (463 aa). The active-site 4-aspartylphosphate intermediate is Asp503. Positions 595–617 are disordered; it reads ETQDFDTVQPTVLRPPPEQATYH. Mg(2+) is bound by residues Asp883 and Asp887. A helical membrane pass occupies residues 936–956; that stretch reads YAVSKYMAAYSLNEFLSVMLL. Topologically, residues 957 to 962 are extracellular; sequence YNDGTN. A helical membrane pass occupies residues 963-983; it reads ISDGQFLYIDLVLITLVALFL. The Cytoplasmic segment spans residues 984–1007; that stretch reads GNTEASRKLSGIPPPRRLATSAFY. A helical transmembrane segment spans residues 1008–1028; the sequence is FSVFGQMFFNIITQTTGYLLV. Residues 1029–1046 lie on the Extracellular side of the membrane; the sequence is RGQSWYVPNPEELDNTTT. Residues 1047–1067 form a helical membrane-spanning segment; that stretch reads MIGTTVFFTSCCMYLGYAFVY. Residues 1068–1085 lie on the Cytoplasmic side of the membrane; sequence SKGHPYRRSVFTNWLLCG. A helical membrane pass occupies residues 1086 to 1106; sequence IIFVIGAINMVMIFTNMGFLM. The Extracellular segment spans residues 1107–1120; the sequence is NLMGFVYVPSTSMR. A helical membrane pass occupies residues 1121–1141; it reads FILLAISLAGVFLSLLYEHFF. Residues 1142-1203 are Cytoplasmic-facing; it reads VEKVVAIHFE…DRKETIESKC (62 aa).

This sequence belongs to the cation transport ATPase (P-type) (TC 3.A.3) family. Type V subfamily. Expressed in the 20 intestinal cells and in the excretory cell.

The protein resides in the apical cell membrane. It catalyses the reaction ATP + H2O = ADP + phosphate + H(+). Involved in the uptake and/or transport of polyamines, probably through ATP hydrolysis. This contributes to the maintenance of intracellular polyamine levels. Polyamines are essential for cell proliferation and are implicated in cellular processes, ranging from DNA replication to apoptosis. The chain is Cation-transporting ATPase catp-5 from Caenorhabditis elegans.